The following is a 416-amino-acid chain: Transcription factor caaR (416 aa).

The segment at residues 13–44 (CDRCYAQKLRCPRPSTNDDASCIRCLRQKVQC) is a DNA-binding region (zn(2)-C6 fungal-type). 2 disordered regions span residues 68–90 (ATAGAPPITTTTTTAAPSSSDTA) and 130–150 (QPPPLDTTPPPRSLSASGLDN). Over residues 130-141 (QPPPLDTTPPPR) the composition is skewed to pro residues. The next 2 membrane-spanning stretches (helical) occupy residues 249–269 (VIYHFTIACYSLLLLIYATLL) and 302–322 (SAPSLVELRLVLLFHMITYFL).

Its subcellular location is the membrane. The protein localises to the nucleus. Functionally, transcription factor that positively regulates the expression of the gene cluster that mediates the biosynthesis of the acyltetronic acid derivatives carlosic acid, agglomerin F and carlosic acid methyl ether. The protein is Transcription factor caaR of Aspergillus niger (strain ATCC MYA-4892 / CBS 513.88 / FGSC A1513).